A 187-amino-acid polypeptide reads, in one-letter code: Corticoliberin (187 aa).

Residues 1–19 form the signal peptide; that stretch reads MRLRLLVSAGMLLVALSSC. The propeptide occupies 20 to 144; it reads LPCRALLSRG…HQGALERERR (125 aa). 2 disordered regions span residues 75 to 94 and 114 to 146; these read AARL…SRPS and QRSL…RRSE. The span at 117–129 shows a compositional bias: basic and acidic residues; the sequence is LDSRAEPAERGAE. Position 185 is an isoleucine amide (isoleucine 185).

Belongs to the sauvagine/corticotropin-releasing factor/urotensin I family. In terms of assembly, interacts (via C-terminus) with CRFR1 (via N-terminal extracellular domain). Expressed in parvocellular paraventricular nucleus of the hypothalamus and in medial accessory olivary nucleus.

It localises to the secreted. In terms of biological role, hormone regulating the release of corticotropin from pituitary gland. Induces NLRP6 in intestinal epithelial cells, hence may influence gut microbiota profile. In Mus musculus (Mouse), this protein is Corticoliberin (Crh).